The primary structure comprises 577 residues: Proton channel OTOP3 (577 aa).

The interval 1-46 is disordered; the sequence is MASQTSAPAEPAPMPSPEAKTTEGASSYDQADMETKHAGSPCPPKQ. Residues 1–69 are Cytoplasmic-facing; the sequence is MASQTSAPAE…RDRQAQKAGQ (69 aa). Residues 70–90 traverse the membrane as a helical segment; the sequence is LFSGLLALNVVFLGGAFICSM. Topologically, residues 91 to 100 are extracellular; the sequence is IFNKVSVTLG. Residues 101 to 124 traverse the membrane as a helical segment; it reads DVWILLAALKVLSLLWLLYYTVGT. Topologically, residues 125 to 140 are cytoplasmic; that stretch reads TRKPHAVLYRDPHAGP. Residues 141–162 form a helical membrane-spanning segment; the sequence is IWVRGSLVLFGSCTVCLNIFRM. The Extracellular portion of the chain corresponds to 163 to 174; it reads GYDVSHIHCKSE. A helical transmembrane segment spans residues 175-198; the sequence is VELIFPAIEIVFMIIQTWVLWRHC. Topologically, residues 199 to 206 are cytoplasmic; sequence KDCVQVQT. A helical membrane pass occupies residues 207–229; it reads NFTRCGLMLTLATNLLMWVLAVT. Topologically, residues 230-276 are extracellular; that stretch reads NDSMHREIEAELDALMEKFSGNGTNTCMCLNTTVCEVFRKGYLMLYP. Residues 277–293 traverse the membrane as a helical segment; that stretch reads FSTEYCLICCAVLFVMW. At 294-319 the chain is on the cytoplasmic side; sequence KNVSRSLAAHTGAHPNRSPFRLHGTI. A helical transmembrane segment spans residues 320 to 339; the sequence is FGPLLGLLALVAGVCVFVLF. Over 340-353 the chain is Extracellular; it reads QIEASGPDIARQYF. A helical membrane pass occupies residues 354-376; it reads TLYYAFYVAVLPTMSLACLAGTA. At 377–394 the chain is on the cytoplasmic side; the sequence is IHGLEERELDTLKNPTRS. A helical membrane pass occupies residues 395–416; that stretch reads LDVVLLMGAALGQMGIAYFSIV. At 417–427 the chain is on the extracellular side; that stretch reads AIVATQPHELL. The chain crosses the membrane as a helical span at residues 428–450; it reads NQLILAYSLLLILQHITQNLFII. Topologically, residues 451 to 510 are cytoplasmic; it reads EGLHRRPLWEPAVSGVMEKQDVELPRRGSLRELGQDLRRASRAYIHSFSHLNWKRRMLKE. A helical transmembrane segment spans residues 511–528; the sequence is ISLFLILCNITLWMMPAF. The Extracellular portion of the chain corresponds to 529–547; the sequence is GIHPEFENGLEKDFYGYRT. The chain crosses the membrane as a helical span at residues 548–570; that stretch reads WFTIVNFGLPLGVFYRMHSVGGL. Over 571–577 the chain is Cytoplasmic; the sequence is VEVYLGA.

Belongs to the otopetrin family. In terms of assembly, homodimer. In terms of tissue distribution, expressed in epidermis, small intestine, stomach and retina.

It is found in the cell membrane. It catalyses the reaction H(+)(in) = H(+)(out). With respect to regulation, activated by extracellular acidification. Activated by Zn(2+) under non-acidic conditions. Proton-selective channel gated by extracellular protons. The sequence is that of Proton channel OTOP3 from Mus musculus (Mouse).